Reading from the N-terminus, the 563-residue chain is Urocanate hydratase (563 aa).

Residues Gly53–Gly54, Gln131, Gly177–Gly179, Glu197, Arg202, Asn243–Ala244, Gln264–His268, Tyr274–Leu275, and Tyr323 each bind NAD(+). Cys411 is a catalytic residue. Residue Gly493 participates in NAD(+) binding.

It belongs to the urocanase family. NAD(+) serves as cofactor.

Its subcellular location is the cytoplasm. The catalysed reaction is 4-imidazolone-5-propanoate = trans-urocanate + H2O. It participates in amino-acid degradation; L-histidine degradation into L-glutamate; N-formimidoyl-L-glutamate from L-histidine: step 2/3. Its function is as follows. Catalyzes the conversion of urocanate to 4-imidazolone-5-propionate. The sequence is that of Urocanate hydratase from Yersinia enterocolitica serotype O:8 / biotype 1B (strain NCTC 13174 / 8081).